The primary structure comprises 225 residues: Large ribosomal subunit protein uL1 (225 aa).

It belongs to the universal ribosomal protein uL1 family. As to quaternary structure, part of the 50S ribosomal subunit.

Its function is as follows. Binds directly to 23S rRNA. The L1 stalk is quite mobile in the ribosome, and is involved in E site tRNA release. In terms of biological role, protein L1 is also a translational repressor protein, it controls the translation of the L11 operon by binding to its mRNA. This is Large ribosomal subunit protein uL1 from Rhodopirellula baltica (strain DSM 10527 / NCIMB 13988 / SH1).